Here is a 333-residue protein sequence, read N- to C-terminus: Holliday junction branch migration complex subunit RuvB (333 aa).

Residues Met-1 to Tyr-182 form a large ATPase domain (RuvB-L) region. ATP-binding positions include Leu-21, Arg-22, Gly-63, Lys-66, Thr-67, Thr-68, Glu-129–Phe-131, Arg-172, Tyr-182, and Arg-219. Thr-67 provides a ligand contact to Mg(2+). The interval Thr-183–Gln-253 is small ATPAse domain (RuvB-S). A head domain (RuvB-H) region spans residues Lys-256–Val-333. 2 residues coordinate DNA: Arg-311 and Arg-316.

Belongs to the RuvB family. Homohexamer. Forms an RuvA(8)-RuvB(12)-Holliday junction (HJ) complex. HJ DNA is sandwiched between 2 RuvA tetramers; dsDNA enters through RuvA and exits via RuvB. An RuvB hexamer assembles on each DNA strand where it exits the tetramer. Each RuvB hexamer is contacted by two RuvA subunits (via domain III) on 2 adjacent RuvB subunits; this complex drives branch migration. In the full resolvosome a probable DNA-RuvA(4)-RuvB(12)-RuvC(2) complex forms which resolves the HJ.

The protein resides in the cytoplasm. The enzyme catalyses ATP + H2O = ADP + phosphate + H(+). Its function is as follows. The RuvA-RuvB-RuvC complex processes Holliday junction (HJ) DNA during genetic recombination and DNA repair, while the RuvA-RuvB complex plays an important role in the rescue of blocked DNA replication forks via replication fork reversal (RFR). RuvA specifically binds to HJ cruciform DNA, conferring on it an open structure. The RuvB hexamer acts as an ATP-dependent pump, pulling dsDNA into and through the RuvAB complex. RuvB forms 2 homohexamers on either side of HJ DNA bound by 1 or 2 RuvA tetramers; 4 subunits per hexamer contact DNA at a time. Coordinated motions by a converter formed by DNA-disengaged RuvB subunits stimulates ATP hydrolysis and nucleotide exchange. Immobilization of the converter enables RuvB to convert the ATP-contained energy into a lever motion, pulling 2 nucleotides of DNA out of the RuvA tetramer per ATP hydrolyzed, thus driving DNA branch migration. The RuvB motors rotate together with the DNA substrate, which together with the progressing nucleotide cycle form the mechanistic basis for DNA recombination by continuous HJ branch migration. Branch migration allows RuvC to scan DNA until it finds its consensus sequence, where it cleaves and resolves cruciform DNA. This is Holliday junction branch migration complex subunit RuvB from Bacillus cereus (strain G9842).